Consider the following 413-residue polypeptide: Palmitoyltransferase ZDHHC6 (413 aa).

Residues 1 to 24 (MGIFCSVIKFENLQDLRRLCHWGP) lie on the Cytoplasmic side of the membrane. Residues 25-45 (IIALGVIAICSTMAMIDSVLW) traverse the membrane as a helical segment. The Lumenal portion of the chain corresponds to 46 to 57 (YWPLHTTGGSVN). The helical transmembrane segment at 58–78 (FIMLINWTVMILYNYFNAMFA) threads the bilayer. The Cytoplasmic portion of the chain corresponds to 79–143 (GPGFVPRGWK…NCCGHQNHAS (65 aa)). Residues 99-149 (QYCKVCQAYKAPRSHHCRKCNRCVMKMDHHCPWINNCCGHQNHASFTLFLL) enclose the DHHC domain. The active-site S-palmitoyl cysteine intermediate is Cys129. A helical transmembrane segment spans residues 144–164 (FTLFLLLAPLGCTHAAFIFVM). Over 165–194 (TMYTQLYNRLSFGWNTVKIDMSAARRDPPP) the chain is Lumenal. Residues 195-215 (IVPFGLAAFAATLFALGLALG) form a helical membrane-spanning segment. At 216 to 413 (TTIAVGMLFF…PAPEGEKKNR (198 aa)) the chain is on the cytoplasmic side. One can recognise an SH3 domain in the interval 313–398 (VRSVRYKVIE…PRNCVEKCPC (86 aa)). 3 S-palmitoyl cysteine lipidation sites follow: Cys328, Cys329, and Cys343. The Di-lysine motif motif lies at 410-413 (KKNR).

Belongs to the DHHC palmitoyltransferase family. As to quaternary structure, homooligomerizes. Interacts with SELENOK. Post-translationally, palmitoylated at 3 different sites by ZDHHC16. The combination of the different palmitoylation events strongly affects the quaternary assembly of ZDHHC6, its localization, stability and function. Palmitoylation at Cys-328 accelerates the turnover of ZDHHC6. Depalmitoylated by LYPLA2.

The protein resides in the endoplasmic reticulum membrane. It carries out the reaction L-cysteinyl-[protein] + hexadecanoyl-CoA = S-hexadecanoyl-L-cysteinyl-[protein] + CoA. The enzyme catalyses L-cysteinyl-[protein] + octadecanoyl-CoA = S-octadecanoyl-L-cysteinyl-[protein] + CoA. Endoplasmic reticulum palmitoyl acyltransferase that mediates palmitoylation of proteins such as AMFR, CALX, ITPR1 and TFRC. Palmitoylates calnexin (CALX), which is required for its association with the ribosome-translocon complex and efficient folding of glycosylated proteins. Mediates palmitoylation of AMFR, promoting AMFR distribution to the peripheral endoplasmic reticulum. Together with SELENOK, palmitoylates ITPR1 in immune cells, leading to regulate ITPR1 stability and function. Stearoyltransferase that mediates stearoylation of TFRC to inhibit TFRC-mediated activation of the JNK pathway and mitochondrial fragmentation. This Mus musculus (Mouse) protein is Palmitoyltransferase ZDHHC6.